Consider the following 320-residue polypeptide: Ferrochelatase (320 aa).

Residues His194 and Glu275 each contribute to the Fe cation site.

It belongs to the ferrochelatase family. As to quaternary structure, monomer.

It is found in the cytoplasm. It catalyses the reaction heme b + 2 H(+) = protoporphyrin IX + Fe(2+). The protein operates within porphyrin-containing compound metabolism; protoheme biosynthesis; protoheme from protoporphyrin-IX: step 1/1. Functionally, catalyzes the ferrous insertion into protoporphyrin IX. The protein is Ferrochelatase of Escherichia coli (strain K12 / MC4100 / BW2952).